Consider the following 335-residue polypeptide: Holliday junction branch migration complex subunit RuvB (335 aa).

Positions 1–183 (MDERIISSET…FGVIDHLEFY (183 aa)) are large ATPase domain (RuvB-L). ATP contacts are provided by residues Leu-22, Arg-23, Gly-64, Lys-67, Thr-68, Thr-69, 130 to 132 (EDY), Arg-173, Tyr-183, and Arg-220. Residue Thr-68 coordinates Mg(2+). The interval 184–254 (TEEQLTEIVL…LAKEALTLLQ (71 aa)) is small ATPAse domain (RuvB-S). The segment at 257–335 (PRGLDTIDQK…HLGISYEKEV (79 aa)) is head domain (RuvB-H). The DNA site is built by Arg-293, Arg-312, and Arg-317.

This sequence belongs to the RuvB family. Homohexamer. Forms an RuvA(8)-RuvB(12)-Holliday junction (HJ) complex. HJ DNA is sandwiched between 2 RuvA tetramers; dsDNA enters through RuvA and exits via RuvB. An RuvB hexamer assembles on each DNA strand where it exits the tetramer. Each RuvB hexamer is contacted by two RuvA subunits (via domain III) on 2 adjacent RuvB subunits; this complex drives branch migration. In the full resolvosome a probable DNA-RuvA(4)-RuvB(12)-RuvC(2) complex forms which resolves the HJ.

The protein resides in the cytoplasm. It carries out the reaction ATP + H2O = ADP + phosphate + H(+). The RuvA-RuvB-RuvC complex processes Holliday junction (HJ) DNA during genetic recombination and DNA repair, while the RuvA-RuvB complex plays an important role in the rescue of blocked DNA replication forks via replication fork reversal (RFR). RuvA specifically binds to HJ cruciform DNA, conferring on it an open structure. The RuvB hexamer acts as an ATP-dependent pump, pulling dsDNA into and through the RuvAB complex. RuvB forms 2 homohexamers on either side of HJ DNA bound by 1 or 2 RuvA tetramers; 4 subunits per hexamer contact DNA at a time. Coordinated motions by a converter formed by DNA-disengaged RuvB subunits stimulates ATP hydrolysis and nucleotide exchange. Immobilization of the converter enables RuvB to convert the ATP-contained energy into a lever motion, pulling 2 nucleotides of DNA out of the RuvA tetramer per ATP hydrolyzed, thus driving DNA branch migration. The RuvB motors rotate together with the DNA substrate, which together with the progressing nucleotide cycle form the mechanistic basis for DNA recombination by continuous HJ branch migration. Branch migration allows RuvC to scan DNA until it finds its consensus sequence, where it cleaves and resolves cruciform DNA. This is Holliday junction branch migration complex subunit RuvB from Listeria monocytogenes serovar 1/2a (strain ATCC BAA-679 / EGD-e).